A 545-amino-acid chain; its full sequence is T-complex protein 1 subunit gamma (545 aa).

N-acetylmethionine is present on methionine 1. The segment at 1 to 24 is disordered; that stretch reads MMGHRPVLVLSQNTKRESGRKVQS. Residue serine 11 is modified to Phosphoserine. Residue lysine 15 forms a Glycyl lysine isopeptide (Lys-Gly) (interchain with G-Cter in SUMO2) linkage. Glycine 42 lines the ADP pocket. Glycine 42 is an ATP binding site. Aspartate 93 contacts Mg(2+). ADP contacts are provided by glycine 94, threonine 95, threonine 96, serine 97, threonine 162, and lysine 163. Glycine 94, threonine 95, and threonine 96 together coordinate ATP. Serine 170 bears the Phosphoserine mark. Position 222 is an N6-acetyllysine (lysine 222). Phosphoserine occurs at positions 243 and 244. Tyrosine 247 is subject to Phosphotyrosine. Glycyl lysine isopeptide (Lys-Gly) (interchain with G-Cter in SUMO2) cross-links involve residues lysine 248 and lysine 249. The residue at position 252 (serine 252) is a Phosphoserine. Cysteines 366 and 372 form a disulfide. Lysine 381 is covalently cross-linked (Glycyl lysine isopeptide (Lys-Gly) (interchain with G-Cter in SUMO2)). Glycine 411 lines the ADP pocket. Residue glycine 411 participates in ATP binding. Threonine 430 and threonine 459 each carry phosphothreonine. 4 residues coordinate ADP: glycine 482, glutamate 483, glutamate 497, and lysine 502. ATP is bound at residue glycine 482. Glutamate 497 provides a ligand contact to ATP. Residues 526–545 are disordered; sequence HKKKGDDQNRQTGAPDAGQE.

It belongs to the TCP-1 chaperonin family. In terms of assembly, component of the chaperonin-containing T-complex (TRiC), a hexadecamer composed of two identical back-to-back stacked rings enclosing a protein folding chamber. Each ring is made up of eight different subunits: TCP1/CCT1, CCT2, CCT3, CCT4, CCT5, CCT6A/CCT6, CCT7, CCT8. Interacts with PACRG. Interacts with DNAAF4. Interacts with DLEC1. In terms of processing, the N-terminus is blocked.

The protein resides in the cytoplasm. The catalysed reaction is ATP + H2O = ADP + phosphate + H(+). Component of the chaperonin-containing T-complex (TRiC), a molecular chaperone complex that assists the folding of actin, tubulin and other proteins upon ATP hydrolysis. The TRiC complex mediates the folding of WRAP53/TCAB1, thereby regulating telomere maintenance. As part of the TRiC complex may play a role in the assembly of BBSome, a complex involved in ciliogenesis regulating transports vesicles to the cilia. This is T-complex protein 1 subunit gamma (Cct3) from Mus musculus (Mouse).